A 366-amino-acid chain; its full sequence is 4-hydroxy-3-methylbut-2-en-1-yl diphosphate synthase (flavodoxin) (366 aa).

[4Fe-4S] cluster contacts are provided by Cys270, Cys273, Cys305, and Glu312.

Belongs to the IspG family. [4Fe-4S] cluster is required as a cofactor.

It carries out the reaction (2E)-4-hydroxy-3-methylbut-2-enyl diphosphate + oxidized [flavodoxin] + H2O + 2 H(+) = 2-C-methyl-D-erythritol 2,4-cyclic diphosphate + reduced [flavodoxin]. It functions in the pathway isoprenoid biosynthesis; isopentenyl diphosphate biosynthesis via DXP pathway; isopentenyl diphosphate from 1-deoxy-D-xylulose 5-phosphate: step 5/6. Converts 2C-methyl-D-erythritol 2,4-cyclodiphosphate (ME-2,4cPP) into 1-hydroxy-2-methyl-2-(E)-butenyl 4-diphosphate. The sequence is that of 4-hydroxy-3-methylbut-2-en-1-yl diphosphate synthase (flavodoxin) from Acidithiobacillus ferrooxidans (strain ATCC 53993 / BNL-5-31) (Leptospirillum ferrooxidans (ATCC 53993)).